The primary structure comprises 239 residues: Uridylate kinase (239 aa).

12–15 is a binding site for ATP; that stretch reads KLSG. An involved in allosteric activation by GTP region spans residues 20–25; it reads GDQGAG. A UMP-binding site is contributed by Gly-54. 2 residues coordinate ATP: Gly-55 and Arg-59. Residues Asp-74 and 135–142 contribute to the UMP site; that span reads TGNPFFTT. Positions 162, 168, and 171 each coordinate ATP.

This sequence belongs to the UMP kinase family. Homohexamer.

The protein localises to the cytoplasm. It carries out the reaction UMP + ATP = UDP + ADP. It functions in the pathway pyrimidine metabolism; CTP biosynthesis via de novo pathway; UDP from UMP (UMPK route): step 1/1. Allosterically activated by GTP. Inhibited by UTP. In terms of biological role, catalyzes the reversible phosphorylation of UMP to UDP. In Methylococcus capsulatus (strain ATCC 33009 / NCIMB 11132 / Bath), this protein is Uridylate kinase.